Consider the following 614-residue polypeptide: UDP-sugar pyrophosphorylase (614 aa).

Residue Ala-2 is modified to N-acetylalanine.

The protein belongs to the USP family. Mg(2+) is required as a cofactor. The cofactor is Mn(2+). In terms of tissue distribution, ubiquitous, but most abundant in rosette leaves, inflorescences, stems, stamens and pollen.

It carries out the reaction a monosaccharide 1-phosphate + UTP + H(+) = a UDP-monosaccharide + diphosphate. In terms of biological role, required for the synthesis of the intine, the pectocellulosic inner wall of developing pollen. May function as the terminal enzyme of the myo-inositol oxidation (MIO) pathway. May also play a role in the salvage pathway for synthesis of nucleotide sugars. Can use a wide range of substrates including glucose-1-phosphate, galactose-1-phosphate, xylose-1-phosphate, arabinose-1-phosphate and glucuronate-1-phosphate. The protein is UDP-sugar pyrophosphorylase (USP) of Arabidopsis thaliana (Mouse-ear cress).